Reading from the N-terminus, the 199-residue chain is Potassium-transporting ATPase KdpC subunit (199 aa).

The helical transmembrane segment at 21-43 threads the bilayer; the sequence is LALLFVCGVVYTGTVTQLGGALF.

The protein belongs to the KdpC family. As to quaternary structure, the system is composed of three essential subunits: KdpA, KdpB and KdpC.

It is found in the cell inner membrane. Its function is as follows. Part of the high-affinity ATP-driven potassium transport (or Kdp) system, which catalyzes the hydrolysis of ATP coupled with the electrogenic transport of potassium into the cytoplasm. This subunit acts as a catalytic chaperone that increases the ATP-binding affinity of the ATP-hydrolyzing subunit KdpB by the formation of a transient KdpB/KdpC/ATP ternary complex. The chain is Potassium-transporting ATPase KdpC subunit from Shewanella putrefaciens (strain CN-32 / ATCC BAA-453).